The primary structure comprises 296 residues: Dof zinc finger protein DOF3.7 (296 aa).

The tract at residues 41–69 (NTRPNATASNGGSGGNTNNTATMETRKAR) is disordered. Residues 45 to 62 (NATASNGGSGGNTNNTAT) are compositionally biased toward low complexity. The Dof-type zinc-finger motif lies at 74–128 (VNCPRCNSTNTKFCYYNNYSLTQPRYFCKGCRRYWTEGGSLRNVPVGGSSRKNKR). The Zn(2+) site is built by C76, C79, C101, and C104. The interval 115-146 (RNVPVGGSSRKNKRSSTPLASPSNPKLPDLNP) is disordered. Residues 129 to 138 (SSTPLASPSN) show a composition bias toward polar residues.

In terms of tissue distribution, expressed in the phloem of the mother plant, including in roots, stem, leaves and flowers, but not present in the seed and embryo. In maturing siliques, found all through the funiculus connecting the placenta to the ovule, but not in the ovule.

It localises to the nucleus. Transcription factor specifically involved in the maternal control of seed germination. Regulates transcription by binding to a 5'-AA[AG]G-3' consensus core sequence. May ensure the inactivity of a component that would be activated to trigger germination as a consequence of red light perception. This is Dof zinc finger protein DOF3.7 (DOF3.7) from Arabidopsis thaliana (Mouse-ear cress).